A 995-amino-acid polypeptide reads, in one-letter code: ATP-dependent RNA helicase DBP10 (995 aa).

Positions 1–120 (MAGVQKRKRD…TQTGDDEDDV (120 aa)) are disordered. Acidic residues-rich tracts occupy residues 12–25 (EDQD…DDIA) and 37–50 (SESD…EVEA). Over residues 71 to 81 (VNNKKKAENKD) the composition is skewed to basic and acidic residues. The residue at position 101 (S101) is a Phosphoserine. The short motif at 137–165 (GSFPSFGLSKIVLNNIKRKGFRQPTPIQR) is the Q motif element. One can recognise a Helicase ATP-binding domain in the interval 168-340 (IPLILQSRDI…KAGLVNPVLV (173 aa)). ATP is bound at residue 181-188 (ARTGSGKT). The short motif at 288-291 (DEAD) is the DEAD box element. Disordered regions lie at residues 389–427 (LQNS…PAAN) and 889–973 (GSRE…EQIR). Phosphoserine occurs at positions 398 and 400. 2 stretches are compositionally biased toward basic residues: residues 407 to 422 (QKKR…RKQK) and 914 to 924 (VRGKFKHKQMK). The region spanning 418–568 (FRKQKMPAAN…PMYDSLVDVM (151 aa)) is the Helicase C-terminal domain. Over residues 964–973 (SELKSTEQIR) the composition is skewed to basic and acidic residues.

Belongs to the DEAD box helicase family. DDX54/DBP10 subfamily. Interacts with RRP1 and associates with pre-ribosomal particles.

It is found in the nucleus. The protein localises to the nucleolus. It catalyses the reaction ATP + H2O = ADP + phosphate + H(+). ATP-binding RNA helicase involved in the biogenesis of 60S ribosomal subunits and is required for the normal formation of 25S and 5.8S rRNAs. The chain is ATP-dependent RNA helicase DBP10 (DBP10) from Saccharomyces cerevisiae (strain ATCC 204508 / S288c) (Baker's yeast).